The chain runs to 247 residues: 2,3-bisphosphoglycerate-dependent phosphoglycerate mutase (247 aa).

Substrate is bound by residues 8–15, 21–22, arginine 60, 87–90, lysine 98, 114–115, and 183–184; these read RHGESQWN, TG, ERHY, RR, and GN. Residue histidine 9 is the Tele-phosphohistidine intermediate of the active site. Glutamate 87 serves as the catalytic Proton donor/acceptor.

The protein belongs to the phosphoglycerate mutase family. BPG-dependent PGAM subfamily.

It catalyses the reaction (2R)-2-phosphoglycerate = (2R)-3-phosphoglycerate. It functions in the pathway carbohydrate degradation; glycolysis; pyruvate from D-glyceraldehyde 3-phosphate: step 3/5. Its function is as follows. Catalyzes the interconversion of 2-phosphoglycerate and 3-phosphoglycerate. The protein is 2,3-bisphosphoglycerate-dependent phosphoglycerate mutase of Chlorobium phaeovibrioides (strain DSM 265 / 1930) (Prosthecochloris vibrioformis (strain DSM 265)).